A 434-amino-acid chain; its full sequence is Pyrichalasin H cluster regulator BC2 (434 aa).

2 disordered regions span residues 297-321 and 362-383; these read GSSP…CSPL and HPGH…RLSH. Residues 298-309 show a composition bias toward polar residues; sequence SSPSGTPESELT. Basic and acidic residues predominate over residues 362 to 380; sequence HPGHEDHQQQQEEVKQHDR.

It is found in the nucleus. Its function is as follows. Transcription factor probably involved in regulation of gene cluster that mediates the biosynthesis of a tyrosine-derived cytochalasan acting as a fungal signal recognized by resistant rice plants and leads to avirulence in Pi33 resistant rice cultivars. This Pyricularia oryzae (strain 70-15 / ATCC MYA-4617 / FGSC 8958) (Rice blast fungus) protein is Pyrichalasin H cluster regulator BC2.